Here is a 284-residue protein sequence, read N- to C-terminus: uncharacterized protein (284 aa).

Composition is skewed to low complexity over residues 110-123 (NGPRGRQMNGPNNG) and 130-149 (NGPMNGPNNNQFNGPMNGPN). The disordered stretch occupies residues 110–176 (NGPRGRQMNG…PNEFDSDDDD (67 aa)).

The protein resides in the virion. This is an uncharacterized protein from Acanthamoeba polyphaga mimivirus (APMV).